The chain runs to 179 residues: Large ribosomal subunit protein uL5 (179 aa).

This sequence belongs to the universal ribosomal protein uL5 family. Part of the 50S ribosomal subunit; part of the 5S rRNA/L5/L18/L25 subcomplex. Contacts the 5S rRNA and the P site tRNA. Forms a bridge to the 30S subunit in the 70S ribosome.

This is one of the proteins that bind and probably mediate the attachment of the 5S RNA into the large ribosomal subunit, where it forms part of the central protuberance. In the 70S ribosome it contacts protein S13 of the 30S subunit (bridge B1b), connecting the 2 subunits; this bridge is implicated in subunit movement. Contacts the P site tRNA; the 5S rRNA and some of its associated proteins might help stabilize positioning of ribosome-bound tRNAs. The sequence is that of Large ribosomal subunit protein uL5 from Alcanivorax borkumensis (strain ATCC 700651 / DSM 11573 / NCIMB 13689 / SK2).